Consider the following 172-residue polypeptide: Crossover junction endodeoxyribonuclease RuvC (172 aa).

Catalysis depends on residues Asp-12, Glu-71, and Asp-143. Positions 12, 71, and 143 each coordinate Mg(2+).

The protein belongs to the RuvC family. In terms of assembly, homodimer which binds Holliday junction (HJ) DNA. The HJ becomes 2-fold symmetrical on binding to RuvC with unstacked arms; it has a different conformation from HJ DNA in complex with RuvA. In the full resolvosome a probable DNA-RuvA(4)-RuvB(12)-RuvC(2) complex forms which resolves the HJ. The cofactor is Mg(2+).

It is found in the cytoplasm. The catalysed reaction is Endonucleolytic cleavage at a junction such as a reciprocal single-stranded crossover between two homologous DNA duplexes (Holliday junction).. Its function is as follows. The RuvA-RuvB-RuvC complex processes Holliday junction (HJ) DNA during genetic recombination and DNA repair. Endonuclease that resolves HJ intermediates. Cleaves cruciform DNA by making single-stranded nicks across the HJ at symmetrical positions within the homologous arms, yielding a 5'-phosphate and a 3'-hydroxyl group; requires a central core of homology in the junction. The consensus cleavage sequence is 5'-(A/T)TT(C/G)-3'. Cleavage occurs on the 3'-side of the TT dinucleotide at the point of strand exchange. HJ branch migration catalyzed by RuvA-RuvB allows RuvC to scan DNA until it finds its consensus sequence, where it cleaves and resolves the cruciform DNA. In Coxiella burnetii (strain CbuK_Q154) (Coxiella burnetii (strain Q154)), this protein is Crossover junction endodeoxyribonuclease RuvC.